The primary structure comprises 259 residues: 7alpha-hydroxysteroid dehydrogenase (259 aa).

NAD(+) is bound by residues Ile-18, 37–38, and Asn-90; that span reads DY. 2 residues coordinate glycochenodeoxycholate: Ser-145 and Tyr-158. Residues Tyr-158, Lys-162, and 191-193 each bind NAD(+); that span reads ILT. The Proton acceptor role is filled by Tyr-158.

The protein belongs to the short-chain dehydrogenases/reductases (SDR) family. In terms of assembly, homotetramer.

It catalyses the reaction cholate + NAD(+) = 3alpha,12alpha-dihydroxy-7-oxo-5beta-cholanate + NADH + H(+). The catalysed reaction is chenodeoxycholate + NAD(+) = 7-oxolithocholate + NADH + H(+). The enzyme catalyses taurochenodeoxycholate + NAD(+) = 7-oxotaurolithocholate + NADH + H(+). It carries out the reaction glycochenodeoxycholate + NAD(+) = 7-oxoglycolithocholate + NADH + H(+). It catalyses the reaction taurocholate + NAD(+) = 7-oxo-taurodeoxycholate + NADH + H(+). The catalysed reaction is glycocholate + NAD(+) = 7-oxo-glycodeoxycholate + NADH + H(+). The enzyme catalyses an aromatic primary alcohol + NAD(+) = an aromatic aldehyde + NADH + H(+). It carries out the reaction benzyl alcohol + NAD(+) = benzaldehyde + NADH + H(+). It catalyses the reaction 4-cyanobenzyl alcohol + NAD(+) = 4-cyanobenzaldehyde + NADH + H(+). The catalysed reaction is 4-acetoxybenzyl alcohol + NAD(+) = 4-acetoxybenzaldehyde + NADH + H(+). The enzyme catalyses 4-(trifluoromethyl)benzyl alcohol + NAD(+) = 4-(trifluoromethyl)benzaldehyde + NADH + H(+). Its function is as follows. 7alpha-hydroxysteroid dehydrogenase involved in the metabolism of bile acids in the gut. Catalyzes the NAD(+)-dependent oxidation of the 7alpha-hydroxy group of 7alpha-hydroxysteroids, such as cholate, chenodeoxycholate, taurochenodeoxycholate, glycochenodeoxycholate, taurocholate and glycocholate, to the corresponding 7-oxosteroids. Since it is also able to catalyze the reduction of nonsteroidal carbonyl compounds such as various benzaldehyde analogs to their corresponding benzyl alcohols, this enzyme may also function in the detoxification of xenobiotics containing carbonyl groups in the large intestine. The protein is 7alpha-hydroxysteroid dehydrogenase of Bacteroides fragilis (strain ATCC 25285 / DSM 2151 / CCUG 4856 / JCM 11019 / LMG 10263 / NCTC 9343 / Onslow / VPI 2553 / EN-2).